A 160-amino-acid polypeptide reads, in one-letter code: UPF0260 protein Rleg2_0895 (160 aa).

The protein belongs to the UPF0260 family.

The protein is UPF0260 protein Rleg2_0895 of Rhizobium leguminosarum bv. trifolii (strain WSM2304).